The sequence spans 359 residues: 3-dehydroquinate synthase (359 aa).

NAD(+) is bound by residues 71-76, 105-109, 129-130, lysine 142, lysine 151, and 169-172; these read DGEAHK, GVIGD, TT, and TLHT. Residues glutamate 184, histidine 247, and histidine 264 each coordinate Zn(2+).

This sequence belongs to the sugar phosphate cyclases superfamily. Dehydroquinate synthase family. It depends on Co(2+) as a cofactor. The cofactor is Zn(2+). NAD(+) serves as cofactor.

The protein resides in the cytoplasm. It catalyses the reaction 7-phospho-2-dehydro-3-deoxy-D-arabino-heptonate = 3-dehydroquinate + phosphate. The protein operates within metabolic intermediate biosynthesis; chorismate biosynthesis; chorismate from D-erythrose 4-phosphate and phosphoenolpyruvate: step 2/7. Catalyzes the conversion of 3-deoxy-D-arabino-heptulosonate 7-phosphate (DAHP) to dehydroquinate (DHQ). In Neisseria gonorrhoeae (strain ATCC 700825 / FA 1090), this protein is 3-dehydroquinate synthase.